The chain runs to 535 residues: Sodium/hydrogen exchanger 9B2 (535 aa).

Residues 1-14 (MRNQDKRAAHKDSE) are compositionally biased toward basic and acidic residues. The tract at residues 1 to 70 (MRNQDKRAAH…TPAEPNHLQR (70 aa)) is disordered. At 1–85 (MRNQDKRAAH…ACPPRGLLAR (85 aa)) the chain is on the cytoplasmic side. 2 stretches are compositionally biased toward polar residues: residues 16-34 (STEVNHTASSYQGRQQETG) and 46-58 (TEGSNLLNNNEKM). The helical transmembrane segment at 86 to 103 (VITNVTMVILLWAVVWSV) threads the bilayer. Residues 104 to 112 (TGSECLPGG) are Extracellular-facing. Residues 113 to 132 (NLFGIIMLFYCAIIGGKLFG) traverse the membrane as a helical segment. Residues 133–143 (LIKLPTLPPLP) lie on the Cytoplasmic side of the membrane. Residues 144–160 (PLLGMLLAGFLIRNVPV) traverse the membrane as a helical segment. Residues 161–170 (ISDNIQIKHK) lie on the Extracellular side of the membrane. The chain crosses the membrane as a helical span at residues 171-188 (WSSALRSIALSVILVRAG). Topologically, residues 189–199 (LGLDSNALKKL) are cytoplasmic. A helical transmembrane segment spans residues 200-226 (KGVCVRLSLGPCLIEACTSAVLAYFLM). At 227-232 (GLPWQW) the chain is on the extracellular side. Residues 233–241 (GFMLGFVLG) form a helical membrane-spanning segment. The Cytoplasmic portion of the chain corresponds to 242 to 269 (AVSPAVVVPSMLLLQEGGYGVEKGIPTL). Na(+) contacts are provided by Val243, Gly274, Asp277, and Asp278. A helical transmembrane segment spans residues 270–289 (LMAAGSFDDILAITGFNTCL). The Extracellular portion of the chain corresponds to 290–299 (GMAFSTGSTV). The chain crosses the membrane as a helical span at residues 300 to 323 (FNVLKGVLEVIIGVVTGLVLGFFI). The Cytoplasmic segment spans residues 324 to 338 (QYFPSSDQDNLVWKR). Residues 339–356 (AFLVLGLSVLAVFSSTYF) form a helical membrane-spanning segment. The Extracellular segment spans residues 357-360 (GFPG). A helical membrane pass occupies residues 361 to 372 (SGGLCTLVTAFL). Residues 373–389 (AGRGWASTKTDVEKVIA) are Cytoplasmic-facing. Residues 390–410 (VAWDIFQPLLFGLIGAEVLIT) form a helical membrane-spanning segment. Residues 411–416 (ALRPET) lie on the Extracellular side of the membrane. The helical transmembrane segment at 417-439 (IGLCVATLGIAVLIRILVTYLMV) threads the bilayer. Over 440–460 (CFAGFNIKEKIFISFAWLPKA) the chain is Cytoplasmic. A helical membrane pass occupies residues 461-472 (TVQAAIGSVALD). Over 473-485 (TARSHGEKQLEGY) the chain is Extracellular. Residues 486 to 508 (GMDVLTVAFLSIIITAPVGSLLI) form a helical membrane-spanning segment. At 509-535 (GLLGPRLLQKAEQNKDEEDQGETSIQV) the chain is on the cytoplasmic side.

It belongs to the monovalent cation:proton antiporter 1 (CPA1) transporter (TC 2.A.36) family. In terms of assembly, homodimer; dimerization is essential for SLC9B2 activity. Lipids seem to play a role in the stabilization of the dimerization subdomain.

The protein resides in the cell membrane. The protein localises to the mitochondrion membrane. It is found in the endosome membrane. Its subcellular location is the recycling endosome membrane. It localises to the lysosome membrane. The protein resides in the cytoplasmic vesicle. The protein localises to the secretory vesicle. It is found in the synaptic vesicle membrane. Its subcellular location is the cell projection. It localises to the cilium. The protein resides in the flagellum membrane. The protein localises to the basolateral cell membrane. It is found in the apical cell membrane. The enzyme catalyses Li(+)(out) + H(+)(in) = Li(+)(in) + H(+)(out). It carries out the reaction Li(+)(in) + Na(+)(out) = Li(+)(out) + Na(+)(in). The catalysed reaction is Na(+)(in) + H(+)(out) = Na(+)(out) + H(+)(in). Allosterically inhibited by the N-terminal domain. Inhibited by phloretin. Functionally, electroneutral Na(+) Li(+)/H(+) antiporter that extrudes Na(+) or Li(+) in exchange for external protons across the membrane. Uses the proton gradient/membrane potential to extrude sodium. Contributes to the regulation of intracellular pH and sodium homeostasis. Also able to mediate Na(+)/Li(+) antiporter activity in kidney. May play a physiological role in renal tubular function and blood pressure homeostasis. Plays an important role for insulin secretion and clathrin-mediated endocytosis in beta-cells. Involved in sperm motility and fertility. It is controversial whether SLC9B2 plays a role in osteoclast differentiation or not. This chain is Sodium/hydrogen exchanger 9B2 (SLC9B2), found in Bison bison bison (North American plains bison).